The primary structure comprises 157 residues: 3-dehydroquinate dehydratase (157 aa).

Tyr-29 (proton acceptor) is an active-site residue. Residues Asn-80, His-86, and Asp-93 each contribute to the substrate site. The Proton donor role is filled by His-107. Residues 108–109 (IS) and Arg-118 contribute to the substrate site.

The protein belongs to the type-II 3-dehydroquinase family. As to quaternary structure, homododecamer.

It catalyses the reaction 3-dehydroquinate = 3-dehydroshikimate + H2O. Its pathway is metabolic intermediate biosynthesis; chorismate biosynthesis; chorismate from D-erythrose 4-phosphate and phosphoenolpyruvate: step 3/7. Catalyzes a trans-dehydration via an enolate intermediate. This is 3-dehydroquinate dehydratase (aroQ) from Streptomyces coelicolor (strain ATCC BAA-471 / A3(2) / M145).